Consider the following 102-residue polypeptide: Protein S100-A11 (102 aa).

The residue at position 2 (Ser2) is a Phosphoserine. Residue Thr7 is modified to Phosphothreonine. EF-hand domains follow at residues 12-47 (ESLIAVFQKYAGKDGHSVTLSKTEFLSFMNTELAAF) and 52-87 (KDPGVLDRMMKKLDLNSDGQLDFQEFLNLIGGLAVA). Lys24 bears the N6-acetyllysine mark. 8 residues coordinate Ca(2+): Ser28, Thr30, Glu35, Asp65, Asn67, Asp69, Gln71, and Glu76.

Belongs to the S-100 family. In terms of assembly, homodimer; disulfide-linked. Phosphorylation at Thr-7 significantly suppresses homodimerization and promotes association with NCL/nucleolin which induces nuclear translocation. As to expression, smooth muscle and non-muscle tissues.

The protein resides in the cytoplasm. Its subcellular location is the nucleus. Functionally, facilitates the differentiation and the cornification of keratinocytes. This Oryctolagus cuniculus (Rabbit) protein is Protein S100-A11 (S100A11).